Here is a 183-residue protein sequence, read N- to C-terminus: Calcium-binding protein M (183 aa).

A lipid anchor (N-myristoyl glycine) is attached at G2. 4 consecutive EF-hand domains span residues 25–60 (EEVA…KLPN), 61–96 (YPED…IGKG), 97–132 (SAED…MKNV), and 142–177 (DIEL…SPSL). D74, D76, S78, T80, E85, D110, D112, S114, E121, D155, D157, N159, and E166 together coordinate Ca(2+).

This sequence belongs to the recoverin family.

The chain is Calcium-binding protein M (cbpM) from Dictyostelium discoideum (Social amoeba).